A 287-amino-acid polypeptide reads, in one-letter code: ATP synthase gamma chain (287 aa).

Belongs to the ATPase gamma chain family. In terms of assembly, F-type ATPases have 2 components, CF(1) - the catalytic core - and CF(0) - the membrane proton channel. CF(1) has five subunits: alpha(3), beta(3), gamma(1), delta(1), epsilon(1). CF(0) has three main subunits: a, b and c.

It localises to the cell membrane. In terms of biological role, produces ATP from ADP in the presence of a proton gradient across the membrane. The gamma chain is believed to be important in regulating ATPase activity and the flow of protons through the CF(0) complex. This Halothermothrix orenii (strain H 168 / OCM 544 / DSM 9562) protein is ATP synthase gamma chain.